We begin with the raw amino-acid sequence, 316 residues long: Olfactory receptor 8J1 (316 aa).

At M1–I25 the chain is on the extracellular side. Residue N5 is glycosylated (N-linked (GlcNAc...) asparagine). A helical transmembrane segment spans residues P26 to I46. Residues T47 to R54 lie on the Cytoplasmic side of the membrane. A helical transmembrane segment spans residues L55–T75. The Extracellular portion of the chain corresponds to V76–T99. C97 and C189 are oxidised to a cystine. Residues Q100–Y120 form a helical membrane-spanning segment. Residues D121–R139 lie on the Cytoplasmic side of the membrane. A helical transmembrane segment spans residues L140–S160. At S161–T197 the chain is on the extracellular side. The helical transmembrane segment at V198–S217 threads the bilayer. Topologically, residues Y218 to A237 are cytoplasmic. The helical transmembrane segment at F238–M258 threads the bilayer. Residues Y259 to D272 are Extracellular-facing. The helical transmembrane segment at K273–L293 threads the bilayer. Residues R294–M316 lie on the Cytoplasmic side of the membrane.

It belongs to the G-protein coupled receptor 1 family.

It localises to the cell membrane. Odorant receptor. The sequence is that of Olfactory receptor 8J1 (OR8J1) from Homo sapiens (Human).